The chain runs to 359 residues: 3-dehydroquinate synthase (359 aa).

NAD(+) is bound by residues Asp71–Lys76, Gly105–Asp109, Thr129–Thr130, Lys142, Lys151, and Thr169–Thr172. The Zn(2+) site is built by Glu184, His247, and His264.

This sequence belongs to the sugar phosphate cyclases superfamily. Dehydroquinate synthase family. Co(2+) serves as cofactor. Requires Zn(2+) as cofactor. The cofactor is NAD(+).

Its subcellular location is the cytoplasm. It catalyses the reaction 7-phospho-2-dehydro-3-deoxy-D-arabino-heptonate = 3-dehydroquinate + phosphate. Its pathway is metabolic intermediate biosynthesis; chorismate biosynthesis; chorismate from D-erythrose 4-phosphate and phosphoenolpyruvate: step 2/7. In terms of biological role, catalyzes the conversion of 3-deoxy-D-arabino-heptulosonate 7-phosphate (DAHP) to dehydroquinate (DHQ). The chain is 3-dehydroquinate synthase from Neisseria meningitidis serogroup C (strain 053442).